The sequence spans 185 residues: Elongation factor P (185 aa).

The protein belongs to the elongation factor P family.

Its subcellular location is the cytoplasm. It participates in protein biosynthesis; polypeptide chain elongation. Its function is as follows. Involved in peptide bond synthesis. Stimulates efficient translation and peptide-bond synthesis on native or reconstituted 70S ribosomes in vitro. Probably functions indirectly by altering the affinity of the ribosome for aminoacyl-tRNA, thus increasing their reactivity as acceptors for peptidyl transferase. The polypeptide is Elongation factor P (Synechococcus sp. (strain JA-3-3Ab) (Cyanobacteria bacterium Yellowstone A-Prime)).